We begin with the raw amino-acid sequence, 323 residues long: Muscleblind-like protein 3 (323 aa).

4 consecutive C3H1-type zinc fingers follow at residues 13-41 (WLTL…HPSR), 47-73 (NGRV…HPPP), 177-205 (TDKL…HPLE), and 213-239 (ENSV…HPPA).

It belongs to the muscleblind family. As to expression, expressed in fast and slow myotomal muscle, heart, liver, skin, brain and testis.

It is found in the nucleus. Its subcellular location is the cytoplasm. Functionally, involved in pre-mRNA alternative splicing regulation. Could inhibit terminal muscle differentiation, acting at approximately the time of myogenin induction. The polypeptide is Muscleblind-like protein 3 (mbnl3) (Takifugu rubripes (Japanese pufferfish)).